The following is a 328-amino-acid chain: Malate dehydrogenase (328 aa).

An NAD(+)-binding site is contributed by 12 to 18 (GAAGQIA). Positions 93 and 99 each coordinate substrate. NAD(+) is bound by residues asparagine 106, glutamine 113, and 130 to 132 (VGN). 2 residues coordinate substrate: asparagine 132 and arginine 163. Histidine 188 serves as the catalytic Proton acceptor.

This sequence belongs to the LDH/MDH superfamily. MDH type 2 family.

The enzyme catalyses (S)-malate + NAD(+) = oxaloacetate + NADH + H(+). Functionally, catalyzes the reversible oxidation of malate to oxaloacetate. This chain is Malate dehydrogenase, found in Burkholderia lata (strain ATCC 17760 / DSM 23089 / LMG 22485 / NCIMB 9086 / R18194 / 383).